A 229-amino-acid polypeptide reads, in one-letter code: Claudin-25 (229 aa).

Topologically, residues 1–10 (MAWSFRAKVQ) are cytoplasmic. The chain crosses the membrane as a helical span at residues 11–31 (LGGLLLSLLGWVCSCVTTILP). The Extracellular portion of the chain corresponds to 32–81 (QWKTLNLELNEMETWIMGIWEVCVDREEVATVCKAFESFLSLPQELQVAR). The helical transmembrane segment at 82–102 (ILMVASHGLGLLGLLLCSFGS) threads the bilayer. Residues 103–124 (ECFQFHRIRWVFKRRLGLLGRT) are Cytoplasmic-facing. Residues 125–145 (LEASASATTLLPVSWVAHATI) form a helical membrane-spanning segment. The Extracellular portion of the chain corresponds to 146–164 (QDFWDDSIPDIIPRWEFGG). The chain crosses the membrane as a helical span at residues 165–185 (ALYLGWAAGIFLALGGLLLIF). The Cytoplasmic portion of the chain corresponds to 186-229 (SACLGKEDVPFPLMAGPTVPLSCAPVEESDGSFHLMLRPRNLVI).

This sequence belongs to the claudin family.

The protein resides in the cell junction. The protein localises to the tight junction. It localises to the cell membrane. Its function is as follows. Plays a major role in tight junction-specific obliteration of the intercellular space, through calcium-independent cell-adhesion activity. This chain is Claudin-25 (CLDN25), found in Homo sapiens (Human).